The sequence spans 274 residues: 2,3,4,5-tetrahydropyridine-2,6-dicarboxylate N-succinyltransferase (274 aa).

Substrate-binding residues include Arg104 and Asp141.

The protein belongs to the transferase hexapeptide repeat family. As to quaternary structure, homotrimer.

The protein resides in the cytoplasm. The enzyme catalyses (S)-2,3,4,5-tetrahydrodipicolinate + succinyl-CoA + H2O = (S)-2-succinylamino-6-oxoheptanedioate + CoA. It functions in the pathway amino-acid biosynthesis; L-lysine biosynthesis via DAP pathway; LL-2,6-diaminopimelate from (S)-tetrahydrodipicolinate (succinylase route): step 1/3. In Shigella dysenteriae serotype 1 (strain Sd197), this protein is 2,3,4,5-tetrahydropyridine-2,6-dicarboxylate N-succinyltransferase.